The sequence spans 334 residues: DnaJ protein homolog 1 (334 aa).

In terms of domain architecture, J spans 4-68 (DFYKILGLER…KKRDIFDNYG (65 aa)). At Ser-187 the chain carries Phosphoserine.

Its subcellular location is the cytoplasm. The sequence is that of DnaJ protein homolog 1 (DnaJ-1) from Drosophila melanogaster (Fruit fly).